The following is a 128-amino-acid chain: Holin-like protein CidA (128 aa).

4 helical membrane passes run 4 to 24, 26 to 46, 59 to 79, and 88 to 108; these read LLLT…INWV, ALLH…FTLL, GAAW…VGVI, and FGVS…VSTG.

The protein belongs to the CidA/LrgA family. CidA subfamily.

The protein resides in the cell membrane. Functionally, increases the activity of extracellular murein hydrolases possibly by mediating their export via hole formation. Inhibited by the antiholin-like proteins LrgAB. In an unstressed cell, the LrgAB products probably inhibit the function of the CidA protein. When a cell is stressed by the addition of antibiotics or by other factors in the environment, CidA possibly oligomerizes within the bacterial cell membrane, creating lesions that disrupt the proton motive force, which in turn results in loss of cell viability. These lesions are also hypothesized to regulate the subsequent cell lysis by either allowing the murein hydrolases access to the cell wall substrate and/or regulating their activity by a possible change in the cell wall pH that results from loss of membrane potential. The chain is Holin-like protein CidA from Bacillus subtilis (strain 168).